Here is a 370-residue protein sequence, read N- to C-terminus: Histidinol-phosphate aminotransferase (370 aa).

An N6-(pyridoxal phosphate)lysine modification is found at lysine 222.

Belongs to the class-II pyridoxal-phosphate-dependent aminotransferase family. Histidinol-phosphate aminotransferase subfamily. Homodimer. Pyridoxal 5'-phosphate is required as a cofactor.

The catalysed reaction is L-histidinol phosphate + 2-oxoglutarate = 3-(imidazol-4-yl)-2-oxopropyl phosphate + L-glutamate. It participates in amino-acid biosynthesis; L-histidine biosynthesis; L-histidine from 5-phospho-alpha-D-ribose 1-diphosphate: step 7/9. The protein is Histidinol-phosphate aminotransferase of Bacillus cytotoxicus (strain DSM 22905 / CIP 110041 / 391-98 / NVH 391-98).